Reading from the N-terminus, the 152-residue chain is Endoribonuclease YbeY (152 aa).

Residues histidine 114, histidine 118, and histidine 124 each contribute to the Zn(2+) site.

It belongs to the endoribonuclease YbeY family. Requires Zn(2+) as cofactor.

Its subcellular location is the cytoplasm. Its function is as follows. Single strand-specific metallo-endoribonuclease involved in late-stage 70S ribosome quality control and in maturation of the 3' terminus of the 16S rRNA. This is Endoribonuclease YbeY from Coxiella burnetii (strain CbuK_Q154) (Coxiella burnetii (strain Q154)).